The primary structure comprises 214 residues: Pyrrolidone-carboxylate peptidase (214 aa).

Residues glutamate 80, cysteine 143, and histidine 166 contribute to the active site.

The protein belongs to the peptidase C15 family. In terms of assembly, homotetramer.

It is found in the cytoplasm. It catalyses the reaction Release of an N-terminal pyroglutamyl group from a polypeptide, the second amino acid generally not being Pro.. Removes 5-oxoproline from various penultimate amino acid residues except L-proline. The protein is Pyrrolidone-carboxylate peptidase of Escherichia fergusonii (strain ATCC 35469 / DSM 13698 / CCUG 18766 / IAM 14443 / JCM 21226 / LMG 7866 / NBRC 102419 / NCTC 12128 / CDC 0568-73).